We begin with the raw amino-acid sequence, 456 residues long: Bifunctional protein GlmU (456 aa).

The interval 1 to 229 (MSNSSMSVVI…LSEVEGVNNR (229 aa)) is pyrophosphorylase. Residues 11–14 (LAAG), K25, Q76, 81–82 (GT), 103–105 (YGD), G140, E154, N169, and N227 contribute to the UDP-N-acetyl-alpha-D-glucosamine site. A Mg(2+)-binding site is contributed by D105. Residue N227 participates in Mg(2+) binding. The interval 230-250 (LQLSALERVFQTEQAEKLLLA) is linker. The tract at residues 251–456 (GVMLLDPSRF…QGWKRPVKKK (206 aa)) is N-acetyltransferase. Residues R333 and K351 each contribute to the UDP-N-acetyl-alpha-D-glucosamine site. The Proton acceptor role is filled by H363. The UDP-N-acetyl-alpha-D-glucosamine site is built by Y366 and N377. Acetyl-CoA is bound by residues A380, 386–387 (NY), S405, A423, and R440.

It in the N-terminal section; belongs to the N-acetylglucosamine-1-phosphate uridyltransferase family. This sequence in the C-terminal section; belongs to the transferase hexapeptide repeat family. In terms of assembly, homotrimer. Mg(2+) is required as a cofactor.

It localises to the cytoplasm. It carries out the reaction alpha-D-glucosamine 1-phosphate + acetyl-CoA = N-acetyl-alpha-D-glucosamine 1-phosphate + CoA + H(+). It catalyses the reaction N-acetyl-alpha-D-glucosamine 1-phosphate + UTP + H(+) = UDP-N-acetyl-alpha-D-glucosamine + diphosphate. It functions in the pathway nucleotide-sugar biosynthesis; UDP-N-acetyl-alpha-D-glucosamine biosynthesis; N-acetyl-alpha-D-glucosamine 1-phosphate from alpha-D-glucosamine 6-phosphate (route II): step 2/2. The protein operates within nucleotide-sugar biosynthesis; UDP-N-acetyl-alpha-D-glucosamine biosynthesis; UDP-N-acetyl-alpha-D-glucosamine from N-acetyl-alpha-D-glucosamine 1-phosphate: step 1/1. Its pathway is bacterial outer membrane biogenesis; LPS lipid A biosynthesis. Catalyzes the last two sequential reactions in the de novo biosynthetic pathway for UDP-N-acetylglucosamine (UDP-GlcNAc). The C-terminal domain catalyzes the transfer of acetyl group from acetyl coenzyme A to glucosamine-1-phosphate (GlcN-1-P) to produce N-acetylglucosamine-1-phosphate (GlcNAc-1-P), which is converted into UDP-GlcNAc by the transfer of uridine 5-monophosphate (from uridine 5-triphosphate), a reaction catalyzed by the N-terminal domain. The sequence is that of Bifunctional protein GlmU from Yersinia pseudotuberculosis serotype O:1b (strain IP 31758).